The chain runs to 217 residues: Protein-L-isoaspartate O-methyltransferase (217 aa).

Residue Ser65 is part of the active site.

This sequence belongs to the methyltransferase superfamily. L-isoaspartyl/D-aspartyl protein methyltransferase family.

The protein resides in the cytoplasm. It carries out the reaction [protein]-L-isoaspartate + S-adenosyl-L-methionine = [protein]-L-isoaspartate alpha-methyl ester + S-adenosyl-L-homocysteine. Functionally, catalyzes the methyl esterification of L-isoaspartyl residues in peptides and proteins that result from spontaneous decomposition of normal L-aspartyl and L-asparaginyl residues. It plays a role in the repair and/or degradation of damaged proteins. The sequence is that of Protein-L-isoaspartate O-methyltransferase from Chlorobium limicola (strain DSM 245 / NBRC 103803 / 6330).